Reading from the N-terminus, the 526-residue chain is Histone-lysine N-methyltransferase SET5 (526 aa).

Residues 112-403 (AKVEVKFIDD…KGEQIRITYV (292 aa)) enclose the SET domain. The segment at 450-492 (NLGVEKIDSNDNSEDGSKKSTGNRKSSMREAQPDLKEILKNGK) is disordered. Residues 476–492 (SMREAQPDLKEILKNGK) show a composition bias toward basic and acidic residues. Position 517 is a phosphoserine (S517).

It belongs to the class V-like SAM-binding methyltransferase superfamily. Histone-lysine methyltransferase family. SET5 subfamily.

The protein localises to the nucleus. Its subcellular location is the chromosome. It localises to the cytoplasm. It carries out the reaction L-lysyl-[histone] + S-adenosyl-L-methionine = N(6)-methyl-L-lysyl-[histone] + S-adenosyl-L-homocysteine + H(+). Its function is as follows. Histone methyltransferase that monomethylates 'Lys-5', 'Lys-8' and 'Lys-12' of histone H4 (H4K5me1, H4K8me1 and H4K12me1, respectively), thereby controlling gene expression and remodeling chromatin structures. The chain is Histone-lysine N-methyltransferase SET5 (SET5) from Saccharomyces cerevisiae (strain YJM789) (Baker's yeast).